A 197-amino-acid polypeptide reads, in one-letter code: Imidazoleglycerol-phosphate dehydratase (197 aa).

This sequence belongs to the imidazoleglycerol-phosphate dehydratase family.

It localises to the cytoplasm. It carries out the reaction D-erythro-1-(imidazol-4-yl)glycerol 3-phosphate = 3-(imidazol-4-yl)-2-oxopropyl phosphate + H2O. It participates in amino-acid biosynthesis; L-histidine biosynthesis; L-histidine from 5-phospho-alpha-D-ribose 1-diphosphate: step 6/9. The protein is Imidazoleglycerol-phosphate dehydratase (hisB) of Streptomyces coelicolor (strain ATCC BAA-471 / A3(2) / M145).